Consider the following 422-residue polypeptide: Tyrosine--tRNA ligase (422 aa).

Tyr-36 provides a ligand contact to L-tyrosine. A 'HIGH' region motif is present at residues Pro-41 to His-50. L-tyrosine-binding residues include Tyr-175 and Gln-179. The 'KMSKS' region motif lies at Lys-235–Thr-239. Lys-238 is a binding site for ATP. One can recognise an S4 RNA-binding domain in the interval Thr-354 to Gly-411.

This sequence belongs to the class-I aminoacyl-tRNA synthetase family. TyrS type 1 subfamily. In terms of assembly, homodimer.

The protein localises to the cytoplasm. It catalyses the reaction tRNA(Tyr) + L-tyrosine + ATP = L-tyrosyl-tRNA(Tyr) + AMP + diphosphate + H(+). Functionally, catalyzes the attachment of tyrosine to tRNA(Tyr) in a two-step reaction: tyrosine is first activated by ATP to form Tyr-AMP and then transferred to the acceptor end of tRNA(Tyr). In Blochmanniella floridana, this protein is Tyrosine--tRNA ligase.